A 290-amino-acid chain; its full sequence is Acetyl-coenzyme A carboxylase carboxyl transferase subunit beta (290 aa).

In terms of domain architecture, CoA carboxyltransferase N-terminal spans 28 to 290 (LMNKCSKCGT…TVREGLSHGG (263 aa)). Cysteine 32, cysteine 35, cysteine 51, and cysteine 54 together coordinate Zn(2+). The segment at 32-54 (CSKCGTIQYSKELDKNLKVCSSC) adopts a C4-type zinc-finger fold.

It belongs to the AccD/PCCB family. Acetyl-CoA carboxylase is a heterohexamer composed of biotin carboxyl carrier protein (AccB), biotin carboxylase (AccC) and two subunits each of ACCase subunit alpha (AccA) and ACCase subunit beta (AccD). It depends on Zn(2+) as a cofactor.

The protein localises to the cytoplasm. It catalyses the reaction N(6)-carboxybiotinyl-L-lysyl-[protein] + acetyl-CoA = N(6)-biotinyl-L-lysyl-[protein] + malonyl-CoA. It functions in the pathway lipid metabolism; malonyl-CoA biosynthesis; malonyl-CoA from acetyl-CoA: step 1/1. Component of the acetyl coenzyme A carboxylase (ACC) complex. Biotin carboxylase (BC) catalyzes the carboxylation of biotin on its carrier protein (BCCP) and then the CO(2) group is transferred by the transcarboxylase to acetyl-CoA to form malonyl-CoA. In Paenibacillus sp. (strain JDR-2), this protein is Acetyl-coenzyme A carboxylase carboxyl transferase subunit beta.